Reading from the N-terminus, the 120-residue chain is Seripauperin-2 (120 aa).

The chain crosses the membrane as a helical span at residues 7 to 24 (IAAGVAAIAATASATTTL).

This sequence belongs to the SRP1/TIP1 family. Seripauperin subfamily.

The protein resides in the membrane. The polypeptide is Seripauperin-2 (PAU2) (Saccharomyces cerevisiae (strain ATCC 204508 / S288c) (Baker's yeast)).